The primary structure comprises 388 residues: Protein TsgA homolog (388 aa).

12 helical membrane passes run 11–31 (WISF…GMIM), 50–70 (TFLN…IEII), 77–97 (IFSF…NSIF), 101–121 (INMF…TFII), 133–153 (LLLL…IVTA), 160–180 (IIWY…FLLT), 206–226 (VFLL…FISW), 244–264 (SLVS…SFII), 268–288 (NLYR…YCFI), 298–318 (YIII…ITLA), 332–352 (LILL…SPIV), and 360–380 (TLIS…LIYF).

It belongs to the major facilitator superfamily. TsgA family.

It is found in the cell membrane. In Buchnera aphidicola subsp. Acyrthosiphon pisum (strain Tuc7), this protein is Protein TsgA homolog.